We begin with the raw amino-acid sequence, 160 residues long: Cytochrome b6-f complex subunit 4 (160 aa).

3 helical membrane passes run 36 to 56 (LLYV…GLAI), 95 to 115 (LLGI…PFIE), and 131 to 151 (AIFL…TFPI).

It belongs to the cytochrome b family. PetD subfamily. As to quaternary structure, the 4 large subunits of the cytochrome b6-f complex are cytochrome b6, subunit IV (17 kDa polypeptide, PetD), cytochrome f and the Rieske protein, while the 4 small subunits are PetG, PetL, PetM and PetN. The complex functions as a dimer.

The protein resides in the cellular thylakoid membrane. In terms of biological role, component of the cytochrome b6-f complex, which mediates electron transfer between photosystem II (PSII) and photosystem I (PSI), cyclic electron flow around PSI, and state transitions. In Microcystis aeruginosa (strain NIES-843 / IAM M-2473), this protein is Cytochrome b6-f complex subunit 4.